A 93-amino-acid polypeptide reads, in one-letter code: Phosphoribosyl-ATP pyrophosphatase (93 aa).

It belongs to the PRA-PH family.

The protein localises to the cytoplasm. The catalysed reaction is 1-(5-phospho-beta-D-ribosyl)-ATP + H2O = 1-(5-phospho-beta-D-ribosyl)-5'-AMP + diphosphate + H(+). Its pathway is amino-acid biosynthesis; L-histidine biosynthesis; L-histidine from 5-phospho-alpha-D-ribose 1-diphosphate: step 2/9. In Mycobacterium avium (strain 104), this protein is Phosphoribosyl-ATP pyrophosphatase.